We begin with the raw amino-acid sequence, 374 residues long: Tomoregulin-2 (374 aa).

The N-terminal stretch at Met1–Ala40 is a signal peptide. At Phe41–Val320 the chain is on the extracellular side. Kazal-like domains lie at Val90–Thr137 and Val181–Asp229. Cystine bridges form between Cys91–Cys121, Cys95–Cys114, Cys103–Cys135, Cys182–Cys213, Cys186–Cys206, and Cys195–Cys227. N-linked (GlcNAc...) (complex) asparagine; atypical glycosylation occurs at Asn204. N-linked (GlcNAc...) asparagine glycosylation occurs at Asn230. An EGF-like domain is found at His261–Glu301. Cystine bridges form between Cys265–Cys278, Cys273–Cys289, and Cys291–Cys300. The interval Lys303–Val320 is required for shedding. The chain crosses the membrane as a helical span at residues Leu321–Ile341. The Cytoplasmic segment spans residues Thr342–Ile374. Residues Arg353–Ile374 form a disordered region. Polar residues predominate over residues Gln356–Ile374.

Belongs to the tomoregulin family. O-glycosylated; contains chondroitin sulfate glycosaminoglycans. Post-translationally, a soluble form (TMEFF2-ECD) is produced by proteolytic shedding. This shedding can be induced by phorbol ester or pro-inflammatory cytokines such as TNFalpha, and is mediated by ADAM17. In terms of tissue distribution, highly expressed in adult and fetal brain, spinal cord and prostate. Expressed in all brain regions except the pituitary gland, with highest levels in amygdala and corpus callosum. Expressed in the pericryptal myofibroblasts and other stromal cells of normal colonic mucosa. Expressed in prostate carcinoma. Down-regulated in colorectal cancer. Present in Alzheimer disease plaques (at protein level). Isoform 3 is expressed weakly in testis and at high levels in normal and cancerous prostate.

The protein resides in the membrane. It localises to the secreted. May be a survival factor for hippocampal and mesencephalic neurons. The shedded form up-regulates cancer cell proliferation, probably by promoting ERK1/2 phosphorylation. This is Tomoregulin-2 (TMEFF2) from Homo sapiens (Human).